A 327-amino-acid polypeptide reads, in one-letter code: Zinc transport protein ZntB (327 aa).

The Cytoplasmic portion of the chain corresponds to 1 to 273; the sequence is MEAIKGSDVN…ARRTYTMSLM (273 aa). Residues 274 to 294 traverse the membrane as a helical segment; it reads AMVFLPSTFLTGLFGVNLGGI. Topologically, residues 295–300 are periplasmic; it reads PGGGWQ. The chain crosses the membrane as a helical span at residues 301 to 321; sequence FGFSIFCILLVVLIGGVALWL. Residues 322–327 are Cytoplasmic-facing; that stretch reads HRSKWL.

This sequence belongs to the CorA metal ion transporter (MIT) (TC 1.A.35) family.

Its subcellular location is the cell inner membrane. The enzyme catalyses Zn(2+)(out) + H(+)(out) = Zn(2+)(in) + H(+)(in). In terms of biological role, zinc transporter. Acts as a Zn(2+):proton symporter, which likely mediates zinc ion uptake. In Escherichia coli O8 (strain IAI1), this protein is Zinc transport protein ZntB.